A 1091-amino-acid chain; its full sequence is ATP-dependent helicase/deoxyribonuclease subunit B (1091 aa).

It belongs to the helicase family. AddB/RexB type 2 subfamily. As to quaternary structure, heterodimer of AddA and RexB. Mg(2+) serves as cofactor.

In terms of biological role, the heterodimer acts as both an ATP-dependent DNA helicase and an ATP-dependent, dual-direction single-stranded exonuclease. Recognizes the chi site generating a DNA molecule suitable for the initiation of homologous recombination. This subunit has 5' -&gt; 3' nuclease activity but not helicase activity. This is ATP-dependent helicase/deoxyribonuclease subunit B from Streptococcus pneumoniae serotype 19F (strain G54).